The sequence spans 92 residues: UPF0223 protein EF_2462 (92 aa).

The protein belongs to the UPF0223 family.

The protein is UPF0223 protein EF_2462 of Enterococcus faecalis (strain ATCC 700802 / V583).